A 214-amino-acid chain; its full sequence is Neurogenin-3 (214 aa).

Over residues 1 to 14 (MTPQPSGAPTVQVT) the composition is skewed to polar residues. The interval 1-98 (MTPQPSGAPT…NDRERNRMHN (98 aa)) is disordered. The span at 15-26 (RETERSFPRASE) shows a compositional bias: basic and acidic residues. Composition is skewed to basic residues over residues 57 to 70 (APRK…GRSR) and 79 to 88 (KQRRSRRKKA). The 53-residue stretch at 83–135 (SRRKKANDRERNRMHNLNSALDALRGVLPTFPDDAKLTKIETLRFAHNYIWAL) folds into the bHLH domain.

In terms of assembly, efficient DNA binding requires dimerization with another bHLH protein. Interacts with ATOH8.

It localises to the nucleus. Functionally, acts as a transcriptional regulator. Together with NKX2-2, initiates transcriptional activation of NEUROD1. Involved in neurogenesis. Also required for the specification of a common precursor of the 4 pancreatic endocrine cell types. In Homo sapiens (Human), this protein is Neurogenin-3 (NEUROG3).